We begin with the raw amino-acid sequence, 436 residues long: D-amino acid dehydrogenase (436 aa).

Residue 3–17 coordinates FAD; it reads ILILGSGVIGVTSAW.

It belongs to the DadA oxidoreductase family. FAD serves as cofactor.

It carries out the reaction a D-alpha-amino acid + A + H2O = a 2-oxocarboxylate + AH2 + NH4(+). The protein operates within amino-acid degradation; D-alanine degradation; NH(3) and pyruvate from D-alanine: step 1/1. Oxidative deamination of D-amino acids. The protein is D-amino acid dehydrogenase of Photorhabdus laumondii subsp. laumondii (strain DSM 15139 / CIP 105565 / TT01) (Photorhabdus luminescens subsp. laumondii).